A 473-amino-acid chain; its full sequence is tRNA-2-methylthio-N(6)-dimethylallyladenosine synthase (473 aa).

Positions 3–120 (MKLHVKTWGC…LPEMIKEVQE (118 aa)) constitute an MTTase N-terminal domain. [4Fe-4S] cluster contacts are provided by cysteine 12, cysteine 49, cysteine 83, cysteine 157, cysteine 161, and cysteine 164. Residues 143 to 375 (KADGATAFVS…QDRIQQQSQG (233 aa)) form the Radical SAM core domain. Positions 378–441 (RKMVGSVQRI…TNSIRGKFIR (64 aa)) constitute a TRAM domain.

The protein belongs to the methylthiotransferase family. MiaB subfamily. In terms of assembly, monomer. The cofactor is [4Fe-4S] cluster.

The protein localises to the cytoplasm. It catalyses the reaction N(6)-dimethylallyladenosine(37) in tRNA + (sulfur carrier)-SH + AH2 + 2 S-adenosyl-L-methionine = 2-methylsulfanyl-N(6)-dimethylallyladenosine(37) in tRNA + (sulfur carrier)-H + 5'-deoxyadenosine + L-methionine + A + S-adenosyl-L-homocysteine + 2 H(+). Functionally, catalyzes the methylthiolation of N6-(dimethylallyl)adenosine (i(6)A), leading to the formation of 2-methylthio-N6-(dimethylallyl)adenosine (ms(2)i(6)A) at position 37 in tRNAs that read codons beginning with uridine. The protein is tRNA-2-methylthio-N(6)-dimethylallyladenosine synthase of Psychromonas ingrahamii (strain DSM 17664 / CCUG 51855 / 37).